A 220-amino-acid polypeptide reads, in one-letter code: Guanylate kinase (220 aa).

Positions 15–194 (GLMLVISSPS…AFDAVQSIVK (180 aa)) constitute a Guanylate kinase-like domain. An ATP-binding site is contributed by 22–29 (SPSGAGKS).

The protein belongs to the guanylate kinase family.

Its subcellular location is the cytoplasm. The enzyme catalyses GMP + ATP = GDP + ADP. Essential for recycling GMP and indirectly, cGMP. The sequence is that of Guanylate kinase from Rhizobium etli (strain ATCC 51251 / DSM 11541 / JCM 21823 / NBRC 15573 / CFN 42).